The chain runs to 605 residues: MRPKKDGLEDFLRLTPEIKKQLGSLVSDYCNVLNKEFTAGSVEITLRSYKICKAFINEAKAHGREWGGLMATLNICNFWAILRNNRVRRRAENAGNDACSIACPIVMRYVLDHLIVVTDRFFIQAPSNRVMIPATIGTAMYKLLKHSRVRAYTYSKVLGVDRAAIMASGKQVVEHLNRMEKEGLLSSKFKAFCKWVFTYPVLEEMFQTMVSSKTGHLTDDVKDVRALIKTLPRASYSSHAGQRSYVSGVLPACLLSTKSKAVETPILVSGADRMDEELMGNDGGASHTEARYSESGQFHAFTDELESLPSPTMPLKPGAQSADCGDSSSSSSDSGNSDTEQSEREEARAEAPRLRAPKSRRTSRPNRGQTPCPSNAEEPEQPWIAAVHQESDERPIFPHPSKPTFLPPVKRKKGLRDSREGMFLPKPEAGSAISDVFEGREVCQPKRIRPFHPPGSPWANRPLPASLAPTPTGPVHEPVGSLTPAPVPKPLDPAPAVTPEASHLLEDPDEETSQAVKALREMADTVIPQKEEAAICGQMDLNHPPPRGHLDELTTTLESMTEDLNLDSPLTPELNEILDTFLNDECLLHAMHISTGLSIFDTSLF.

2 disordered regions span residues 307-381 and 447-501; these read SLPS…EPEQ and RIRP…TPEA. Positions 321-338 are enriched in low complexity; the sequence is SADCGDSSSSSSDSGNSD. Basic and acidic residues predominate over residues 341-353; that stretch reads QSEREEARAEAPR. Residues 355–364 are compositionally biased toward basic residues; the sequence is RAPKSRRTSR.

Belongs to the herpesviridae Rta family. In terms of assembly, interacts with human ATF7IP protein, leading to promote and regulate host genes in virus-infected cells. Interacts with RNA polymerase III complex; this interaction downregulates small RNA transcription and 5'-pppRNA production.

Its subcellular location is the host nucleus. The protein resides in the virion tegument. Functionally, immediate-early transcription factor that controls the initiation of viral lytic gene expression and lytic reactivation from latency. Triggers lytic replication, and initiates a cellular senescence program in epithelial cells. Up-regulates human DCR3/TNFRSF6B by directly binding to its receptor. Globally induces a proteasome-dependent loss of SUMOylated proteins in the host cell and the loss of promeylocytic leukemia nuclear bodies. Improves the stability of the triplex capsid protein TRX1 by reducing the ubiquitination level of the latter. Mediates evasion of inflammasome activation and antiviral responses (T- and NK cell activation) during EBV early lytic infection. The protein is Replication and transcription activator of Epstein-Barr virus (strain GD1) (HHV-4).